The primary structure comprises 484 residues: Transcription factor TGAL4 (484 aa).

Over residues Met-1 to Pro-11 the composition is skewed to polar residues. Disordered regions lie at residues Met-1–Phe-22, Ala-84–Ser-137, and Gln-155–Thr-181. Residues Ser-123–Ser-137 are compositionally biased toward low complexity. Positions Ala-163 to Thr-173 are enriched in polar residues. One can recognise a bZIP domain in the interval Asp-178 to Arg-222. Residues Lys-180–Lys-200 form a basic motif region. Positions Leu-206–Ile-220 are leucine-zipper. In terms of domain architecture, DOG1 spans Ala-241–Arg-455.

It belongs to the bZIP family. As to quaternary structure, interacts with NPR1/NH1 and NPR3/NH3.

Its subcellular location is the nucleus. Its function is as follows. Transcriptional regulator involved in defense response. The polypeptide is Transcription factor TGAL4 (Oryza sativa subsp. japonica (Rice)).